A 172-amino-acid polypeptide reads, in one-letter code: Galectin-related protein (172 aa).

N-acetylalanine is present on A2. S22 and S25 each carry phosphoserine. The region spanning 39–168 is the Galectin domain; it reads PFCGHIKGGM…TIKINGDLQI (130 aa).

Monomer.

Functionally, does not bind lactose, and may not bind carbohydrates. This Mus musculus (Mouse) protein is Galectin-related protein (Lgalsl).